Consider the following 380-residue polypeptide: ATPase ASNA1 homolog (380 aa).

ATP is bound at residue 48–55 (KGGVGKTT). D77 is a catalytic residue. Residues E248 and N275 each coordinate ATP.

The protein belongs to the arsA ATPase family. In terms of assembly, homodimer.

The protein resides in the cytoplasm. Its subcellular location is the endoplasmic reticulum. ATPase required for the post-translational delivery of tail-anchored (TA) proteins to the endoplasmic reticulum. Recognizes and selectively binds the transmembrane domain of TA proteins in the cytosol. This complex then targets to the endoplasmic reticulum by membrane-bound receptors, where the tail-anchored protein is released for insertion. This process is regulated by ATP binding and hydrolysis. ATP binding drives the homodimer towards the closed dimer state, facilitating recognition of newly synthesized TA membrane proteins. ATP hydrolysis is required for insertion. Subsequently, the homodimer reverts towards the open dimer state, lowering its affinity for the membrane-bound receptor, and returning it to the cytosol to initiate a new round of targeting. In Plasmodium chabaudi chabaudi, this protein is ATPase ASNA1 homolog.